The following is a 386-amino-acid chain: MASHQQCDTYAWFSQRAWVEIDLEALSHNVQQLKQFLSPRTQLMAVVKADAYGHGAVTVAQTALQAGASCLGVATVPEGIQLREAGIQAPILILGATHTPEQIQAIAQWQLQATIGSPKQALIFSNTLETIQHDSPIPVHIKLDTGMSRLGTNWQQAGEFVQLVERLPHLDIASVYSHLATADSPDPGIMEEQHRRFEEAIAQIKTLGIKIPSLHLANSAATLADPRLHYDMVRVGLAVYGLYPAPHLQNKISLKPVIQVQARITHVKTIAAGTGVSYGHQFIAPHEMRLAVVSIGYADGVPRNLSNKMQVLIRGQRVPQIGAITMDQLMIDASALPDLQEGEIVTLLGKQGKEKITADDWAEALNTISWEVLCGFKHRLPRVGVM.

Lys48 functions as the Proton acceptor; specific for D-alanine in the catalytic mechanism. N6-(pyridoxal phosphate)lysine is present on Lys48. Residue Arg149 coordinates substrate. The active-site Proton acceptor; specific for L-alanine is the Tyr278. Position 326 (Met326) interacts with substrate.

Belongs to the alanine racemase family. Requires pyridoxal 5'-phosphate as cofactor.

The catalysed reaction is L-alanine = D-alanine. It functions in the pathway amino-acid biosynthesis; D-alanine biosynthesis; D-alanine from L-alanine: step 1/1. In terms of biological role, catalyzes the interconversion of L-alanine and D-alanine. May also act on other amino acids. The protein is Alanine racemase (alr) of Nostoc sp. (strain PCC 7120 / SAG 25.82 / UTEX 2576).